We begin with the raw amino-acid sequence, 523 residues long: 2-isopropylmalate synthase (523 aa).

The 263-residue stretch at 5–267 (VIIFDTTLRD…HTAINHQEIW (263 aa)) folds into the Pyruvate carboxyltransferase domain. Positions 14, 202, 204, and 238 each coordinate Mn(2+). The tract at residues 392–523 (RLDYFSVQSG…QHNENNKETV (132 aa)) is regulatory domain.

It belongs to the alpha-IPM synthase/homocitrate synthase family. LeuA type 1 subfamily. In terms of assembly, homodimer. Mn(2+) serves as cofactor.

The protein localises to the cytoplasm. The catalysed reaction is 3-methyl-2-oxobutanoate + acetyl-CoA + H2O = (2S)-2-isopropylmalate + CoA + H(+). Its pathway is amino-acid biosynthesis; L-leucine biosynthesis; L-leucine from 3-methyl-2-oxobutanoate: step 1/4. Functionally, catalyzes the condensation of the acetyl group of acetyl-CoA with 3-methyl-2-oxobutanoate (2-ketoisovalerate) to form 3-carboxy-3-hydroxy-4-methylpentanoate (2-isopropylmalate). This Escherichia coli O45:K1 (strain S88 / ExPEC) protein is 2-isopropylmalate synthase.